The primary structure comprises 715 residues: Staphylocoagulase (715 aa).

The N-terminal stretch at 1–26 (MKKQIISLGALAVASSLFTWDNKADA) is a signal peptide. Residues 306-327 (KYGESETKSPVVKEENKVEDPQ) are compositionally biased toward basic and acidic residues. Disordered regions lie at residues 306–348 (KYGE…EETT) and 430–470 (QGTE…FNKT). A compositionally biased stretch (polar residues) spans 431 to 443 (GTESTLKGIQGES). Repeat copies occupy residues 495–521 (ARPR…VSYG), 522–548 (ARPT…VSYG), 549–575 (ARPT…VSYG), 576–602 (ARPT…VSYG), 603–629 (ARPT…VSYG), 630–656 (ARPT…VSYG), 657–683 (ARPT…VSYG), and 684–710 (ARPT…ATYG). The interval 495–710 (ARPRFNKPSE…THADGTATYG (216 aa)) is 8 X 27 AA tandem repeats of A-R-P-[RT]-[FQY]-[NK]-K-[PA]-S-[EK]-T-N-A-Y-N-V-T-T-[NH]-[QAG]-[DN]-G-[TQ]-[VA]-[ST]-Y-G. Residues 674-697 (THGNGQVSYGARPTYNKPSKTNAY) form a disordered region.

Belongs to the staphylocoagulase family.

Staphylocoagulase is an extracellular protein which specifically forms a complex with human prothrombin. This complex named staphylothrombin can clot fibrinogen without any proteolytic cleavage of prothrombin. The sequence is that of Staphylocoagulase from Staphylococcus aureus.